A 490-amino-acid chain; its full sequence is Cytochrome P450 2C8 (490 aa).

Residues S100, N204, and R241 each contribute to the substrate site. S100 is modified (phosphoserine). Heme is bound at residue C435.

Belongs to the cytochrome P450 family. It depends on heme as a cofactor.

It localises to the endoplasmic reticulum membrane. Its subcellular location is the microsome membrane. It catalyses the reaction an organic molecule + reduced [NADPH--hemoprotein reductase] + O2 = an alcohol + oxidized [NADPH--hemoprotein reductase] + H2O + H(+). The enzyme catalyses (5Z,8Z,11Z,14Z)-eicosatetraenoate + reduced [NADPH--hemoprotein reductase] + O2 = (11R,12S)-epoxy-(5Z,8Z,14Z)-eicosatrienoate + oxidized [NADPH--hemoprotein reductase] + H2O + H(+). The catalysed reaction is (5Z,8Z,11Z,14Z)-eicosatetraenoate + reduced [NADPH--hemoprotein reductase] + O2 = (11S,12R)-epoxy-(5Z,8Z,14Z)-eicosatrienoate + oxidized [NADPH--hemoprotein reductase] + H2O + H(+). It carries out the reaction (5Z,8Z,11Z,14Z)-eicosatetraenoate + reduced [NADPH--hemoprotein reductase] + O2 = (14R,15S)-epoxy-(5Z,8Z,11Z)-eicosatrienoate + oxidized [NADPH--hemoprotein reductase] + H2O + H(+). It catalyses the reaction (5Z,8Z,11Z,14Z)-eicosatetraenoate + reduced [NADPH--hemoprotein reductase] + O2 = (14S,15R)-epoxy-(5Z,8Z,11Z)-eicosatrienoate + oxidized [NADPH--hemoprotein reductase] + H2O + H(+). The enzyme catalyses (5Z,8Z,11Z,14Z,17Z)-eicosapentaenoate + reduced [NADPH--hemoprotein reductase] + O2 = 11,12-epoxy-(5Z,8Z,14Z,17Z)-eicosatetraenoate + oxidized [NADPH--hemoprotein reductase] + H2O + H(+). The catalysed reaction is (5Z,8Z,11Z,14Z,17Z)-eicosapentaenoate + reduced [NADPH--hemoprotein reductase] + O2 = 14,15-epoxy-(5Z,8Z,11Z,17Z)-eicosatetraenoate + oxidized [NADPH--hemoprotein reductase] + H2O + H(+). It carries out the reaction (5Z,8Z,11Z,14Z,17Z)-eicosapentaenoate + reduced [NADPH--hemoprotein reductase] + O2 = (17R,18S)-epoxy-(5Z,8Z,11Z,14Z)-eicosatetraenoate + oxidized [NADPH--hemoprotein reductase] + H2O + H(+). It catalyses the reaction (5Z,8Z,11Z,14Z,17Z)-eicosapentaenoate + reduced [NADPH--hemoprotein reductase] + O2 = (17S,18R)-epoxy-(5Z,8Z,11Z,14Z)-eicosatetraenoate + oxidized [NADPH--hemoprotein reductase] + H2O + H(+). The enzyme catalyses (4Z,7Z,10Z,13Z,16Z,19Z)-docosahexaenoate + reduced [NADPH--hemoprotein reductase] + O2 = (19R,20S)-epoxy-(4Z,7Z,10Z,13Z,16Z)-docosapentaenoate + oxidized [NADPH--hemoprotein reductase] + H2O + H(+). The catalysed reaction is (4Z,7Z,10Z,13Z,16Z,19Z)-docosahexaenoate + reduced [NADPH--hemoprotein reductase] + O2 = (19S,20R)-epoxy-(4Z,7Z,10Z,13Z,16Z)-docosapentaenoate + oxidized [NADPH--hemoprotein reductase] + H2O + H(+). It carries out the reaction all-trans-retinoate + reduced [NADPH--hemoprotein reductase] + O2 = all-trans-4-hydroxyretinoate + oxidized [NADPH--hemoprotein reductase] + H2O + H(+). It catalyses the reaction 17beta-estradiol + reduced [NADPH--hemoprotein reductase] + O2 = 16alpha,17beta-estriol + oxidized [NADPH--hemoprotein reductase] + H2O + H(+). The enzyme catalyses estrone + reduced [NADPH--hemoprotein reductase] + O2 = 16alpha-hydroxyestrone + oxidized [NADPH--hemoprotein reductase] + H2O + H(+). It participates in steroid metabolism. Its pathway is lipid metabolism; arachidonate metabolism. It functions in the pathway cofactor metabolism; retinol metabolism. Functionally, a cytochrome P450 monooxygenase involved in the metabolism of various endogenous substrates, including fatty acids, steroid hormones and vitamins. Mechanistically, uses molecular oxygen inserting one oxygen atom into a substrate, and reducing the second into a water molecule, with two electrons provided by NADPH via cytochrome P450 reductase (NADPH--hemoprotein reductase). Primarily catalyzes the epoxidation of double bonds of polyunsaturated fatty acids (PUFA) with a preference for the last double bond. Catalyzes the hydroxylation of carbon-hydrogen bonds. Metabolizes all trans-retinoic acid toward its 4-hydroxylated form. Displays 16-alpha hydroxylase activity toward estrogen steroid hormones, 17beta-estradiol (E2) and estrone (E1). Plays a role in the oxidative metabolism of xenobiotics. It is the principal enzyme responsible for the metabolism of the anti-cancer drug paclitaxel (taxol). This is Cytochrome P450 2C8 from Homo sapiens (Human).